Reading from the N-terminus, the 139-residue chain is Small ribosomal subunit protein uS11 (139 aa).

A disordered region spans residues 118–139; it reads EDVTPIPHDGTRPKGGRRGRRV.

The protein belongs to the universal ribosomal protein uS11 family. Part of the 30S ribosomal subunit.

Located on the platform of the 30S subunit. This is Small ribosomal subunit protein uS11 from Thermococcus sibiricus (strain DSM 12597 / MM 739).